A 216-amino-acid polypeptide reads, in one-letter code: Type-4 uracil-DNA glycosylase (216 aa).

2 residues coordinate [4Fe-4S] cluster: Cys-14 and Cys-17. Uracil is bound by residues 41–43, Phe-55, and Asn-82; that span reads GEA. [4Fe-4S] cluster contacts are provided by Cys-86 and Cys-102. His-164 is a uracil binding site.

It belongs to the uracil-DNA glycosylase (UDG) superfamily. Type 4 (UDGa) family. Interacts with the sliding clamp PCNA3 subunit.

The catalysed reaction is Hydrolyzes single-stranded DNA or mismatched double-stranded DNA and polynucleotides, releasing free uracil.. Removes uracil bases that are present in DNA as a result of either deamination of cytosine or misincorporation of dUMP instead of dTMP. Can remove uracil from double-stranded DNA containing either a U/G or U/A base pair as well as from single-stranded DNA. The protein is Type-4 uracil-DNA glycosylase of Saccharolobus solfataricus (strain ATCC 35092 / DSM 1617 / JCM 11322 / P2) (Sulfolobus solfataricus).